A 419-amino-acid polypeptide reads, in one-letter code: Serine hydroxymethyltransferase (419 aa).

(6S)-5,6,7,8-tetrahydrofolate contacts are provided by residues leucine 121 and 125 to 127 (GHL). Lysine 230 bears the N6-(pyridoxal phosphate)lysine mark. 355-357 (SPF) lines the (6S)-5,6,7,8-tetrahydrofolate pocket.

This sequence belongs to the SHMT family. In terms of assembly, homodimer. It depends on pyridoxal 5'-phosphate as a cofactor.

It localises to the cytoplasm. The enzyme catalyses (6R)-5,10-methylene-5,6,7,8-tetrahydrofolate + glycine + H2O = (6S)-5,6,7,8-tetrahydrofolate + L-serine. Its pathway is one-carbon metabolism; tetrahydrofolate interconversion. It participates in amino-acid biosynthesis; glycine biosynthesis; glycine from L-serine: step 1/1. Its function is as follows. Catalyzes the reversible interconversion of serine and glycine with tetrahydrofolate (THF) serving as the one-carbon carrier. This reaction serves as the major source of one-carbon groups required for the biosynthesis of purines, thymidylate, methionine, and other important biomolecules. Also exhibits THF-independent aldolase activity toward beta-hydroxyamino acids, producing glycine and aldehydes, via a retro-aldol mechanism. This chain is Serine hydroxymethyltransferase, found in Alkalilimnicola ehrlichii (strain ATCC BAA-1101 / DSM 17681 / MLHE-1).